A 298-amino-acid chain; its full sequence is Tryptophan 2,3-dioxygenase (298 aa).

Substrate contacts are provided by residues 51 to 55 (FIIQH), Tyr-113, and Arg-117. Residue His-240 participates in heme binding. Thr-254 contributes to the substrate binding site.

This sequence belongs to the tryptophan 2,3-dioxygenase family. Homotetramer. Requires heme as cofactor.

The catalysed reaction is L-tryptophan + O2 = N-formyl-L-kynurenine. Its pathway is amino-acid degradation; L-tryptophan degradation via kynurenine pathway; L-kynurenine from L-tryptophan: step 1/2. In terms of biological role, heme-dependent dioxygenase that catalyzes the oxidative cleavage of the L-tryptophan (L-Trp) pyrrole ring and converts L-tryptophan to N-formyl-L-kynurenine. Catalyzes the oxidative cleavage of the indole moiety. In Xanthomonas euvesicatoria pv. vesicatoria (strain 85-10) (Xanthomonas campestris pv. vesicatoria), this protein is Tryptophan 2,3-dioxygenase.